A 244-amino-acid chain; its full sequence is MVLHVITALLSIGLCYGMPPSGTTAAPTAYNGAAAQESLIPQQAHHARASLFPQQQRNPSYQTMGSYGSSLFDPSVFPVAHAPASQAGGLLGRAVARTSGGQANAGASSQNLMRSIMQNTMTGRLMGLDNQEIAHLNSVRTLGVGHATIHRLMKIDQIPSYNYYLALKNKPAQFSKAQNYLMTLNRMENHATDSQLEAMGARMLMQRNMDPDLARMVQLDAARGVYGDRLQRVLLGGSQMSLLG.

The first 17 residues, 1-17, serve as a signal peptide directing secretion; sequence MVLHVITALLSIGLCYG.

As to expression, component of the acid-soluble and acid-insoluble organic matrix of prismatic shell layers (at protein level).

It localises to the secreted. This is an uncharacterized protein from Haliotis asinina (Donkey's ear abalone).